The following is a 252-amino-acid chain: Electron transfer flavoprotein subunit beta (252 aa).

It belongs to the ETF beta-subunit/FixA family. As to quaternary structure, heterodimer of an alpha and a beta subunit. Requires AMP as cofactor.

The protein resides in the cytoplasm. The protein operates within lipid metabolism; butanoate metabolism. Part of an electron transfer flavoprotein involved in syntrophic growth of S.wolfei with butyrate. Probably receives electrons from butyryl-CoA dehydrogenases, and transfers them to the membrane-bound quinone oxidoreductase Swol_0698. This Syntrophomonas wolfei subsp. wolfei (strain DSM 2245B / Goettingen) protein is Electron transfer flavoprotein subunit beta.